The following is a 227-amino-acid chain: Agamous-like MADS-box protein AGL17 (227 aa).

The region spanning 3–57 is the MADS-box domain; sequence RGKIVIQKIDDSTSRQVTFSKRRKGLIKKAKELAILCDAEVCLIIFSNTDKLYDF. In terms of domain architecture, K-box spans 86-176; it reads VKFWQREAET…SRKVQRIHQE (91 aa).

Preferentially expressed in roots.

The protein localises to the nucleus. Its function is as follows. Probable transcription factor. This chain is Agamous-like MADS-box protein AGL17 (AGL17), found in Arabidopsis thaliana (Mouse-ear cress).